Reading from the N-terminus, the 73-residue chain is MATQSKYQSKQFDALSGDLIAILEKHKAPVDLSLMALGNMVTNILLENVQTEAQRLALAEAFSNALKNSLKIK.

This sequence belongs to the UPF0352 family.

The sequence is that of UPF0352 protein APJL_0577 from Actinobacillus pleuropneumoniae serotype 3 (strain JL03).